A 1136-amino-acid polypeptide reads, in one-letter code: Collagen alpha-1(XIX) chain (1136 aa).

An N-terminal signal peptide occupies residues 1-23 (MRHTGSWKLWTWVTTFLLPACTC). Residue Asn-47 is glycosylated (N-linked (GlcNAc...) asparagine). Residues 47–231 (NKSELSGFDL…LHQLRIYCNA (185 aa)) form the Laminin G-like domain. 4 disordered regions span residues 252-272 (DFGS…SSYL), 289-673 (EEAG…PGDP), 699-1005 (GLKS…TPAD), and 1043-1136 (SAQA…AGGK). Residues 254-266 (GSTTSSWGTSNTG) are compositionally biased toward low complexity. Residues 289–348 (EEAGLPGTLRSIGHKGDKGEPGEHGLDGTPGLPGQKGEQGLEGIKGEIGEKGEPGAKGDS) form a triple-helical region 1 (COL1) region. Collagen-like domains are found at residues 292-346 (GLPG…GAKG), 347-388 (DSGL…ALTG), and 389-430 (SIGI…GLQG). Composition is skewed to basic and acidic residues over residues 302–314 (HKGD…EHGL) and 332–344 (IKGE…EPGA). Positions 367-426 (GPPGPKGDKGDMGPPGPPALTGSIGIQGPQGPPGKEGQRGRRGKTGPPGNPGPPGPPGPP) are triple-helical region 2 (COL2). The segment covering 387–401 (TGSIGIQGPQGPPGK) has biased composition (low complexity). A compositionally biased stretch (pro residues) spans 414–426 (PGNPGPPGPPGPP). Positions 428 to 437 (LQGLQQPFGG) are enriched in low complexity. The triple-helical region 3 (COL3) stretch occupies residues 442–682 (GTGEHGASGP…PIALPLLGDI (241 aa)). Residues 472 to 490 (HKGEPGEPLTKGEKGDRGE) show a composition bias toward basic and acidic residues. 2 stretches are compositionally biased toward low complexity: residues 511 to 523 (LLGS…QQGP) and 567 to 577 (PGLKGDAGPPG). 6 Collagen-like domains span residues 519 to 577 (GQQG…GPPG), 578 to 618 (ISLP…GPPG), 620 to 673 (GIPG…PGDP), 722 to 777 (KGDV…GPPG), 778 to 810 (LTGR…GPPG), and 833 to 891 (GYPG…APGP). Low complexity predominate over residues 634–645 (PGIQGPRGLPGL). A triple-helical region 4 (COL4) region spans residues 694–812 (QANVPGLKSI…PGPPGPPGVP (119 aa)). Basic and acidic residues-rich tracts occupy residues 714–725 (GKYDPAARKGDV) and 737–758 (EGPK…KGDE). Low complexity predominate over residues 764–788 (PGLSGAPGPTGPPGLTGRTGHPGPT). Pro residues-rich tracts occupy residues 800–811 (PGKPGPPGPPGV) and 834–846 (YPGP…PKGD). The interval 827–1006 (GGVNVPGYPG…PGIPGTPADA (180 aa)) is triple-helical region 5 (COL5). Positions 877–886 (PGIAGISGKP) are enriched in low complexity. Over residues 937–948 (PGDRGPKGERGD) the composition is skewed to basic and acidic residues. Residues 946 to 948 (RGD) carry the Cell attachment site motif. The segment at 1048-1105 (GRPGPPGKDGLPGPPGDPGPQGYRGQKGERGEPGIGLPGSPGLPGSSAVGLPGSPGAP) is triple-helical region 6 (COL6). Positions 1087–1101 (SPGLPGSSAVGLPGS) are enriched in low complexity. Pro residues predominate over residues 1102–1113 (PGAPGPQGPPGP).

It belongs to the fibril-associated collagens with interrupted helices (FACIT) family. As to quaternary structure, oligomer; disulfide-linked. In terms of processing, prolines at the third position of the tripeptide repeating unit (G-X-Y) are hydroxylated in some or all of the chains.

Its subcellular location is the secreted. The protein resides in the extracellular space. It localises to the extracellular matrix. Functionally, may act as a cross-bridge between fibrils and other extracellular matrix molecules. Involved in skeletal myogenesis in the developing esophagus. May play a role in organization of the pericellular matrix or the sphinteric smooth muscle. In Mus musculus (Mouse), this protein is Collagen alpha-1(XIX) chain.